Consider the following 479-residue polypeptide: Glutamyl-tRNA reductase (479 aa).

Substrate-binding positions include 48-51 (TCNR), S104, 109-111 (ERQ), and Q115. C49 (nucleophile) is an active-site residue. Residue 189-194 (GAGKMG) coordinates NADP(+). The segment at 417-455 (DAGRSLAEAPDADTPDLGEAPSRCPYMTHDPGGDGTETE) is disordered.

This sequence belongs to the glutamyl-tRNA reductase family. Homodimer.

It catalyses the reaction (S)-4-amino-5-oxopentanoate + tRNA(Glu) + NADP(+) = L-glutamyl-tRNA(Glu) + NADPH + H(+). The protein operates within porphyrin-containing compound metabolism; protoporphyrin-IX biosynthesis; 5-aminolevulinate from L-glutamyl-tRNA(Glu): step 1/2. Functionally, catalyzes the NADPH-dependent reduction of glutamyl-tRNA(Glu) to glutamate 1-semialdehyde (GSA). In Salinibacter ruber (strain DSM 13855 / M31), this protein is Glutamyl-tRNA reductase.